The sequence spans 437 residues: GTP-binding protein ERG (437 aa).

A compositionally biased stretch (polar residues) spans glutamine 39–glutamate 50. The segment at glutamine 39–proline 65 is disordered. The span at aspartate 51–serine 62 shows a compositional bias: low complexity. Phosphoserine occurs at positions 111 and 112. Residues lysine 152–tryptophan 333 enclose the Era-type G domain. Residues glycine 160–serine 167 form a G1 region. GTP is bound at residue glycine 160–serine 167. The tract at residues asparagine 186–histidine 190 is G2. The segment at aspartate 207–glycine 210 is G3. GTP contacts are provided by residues aspartate 207–leucine 211 and asparagine 279–aspartate 282. The tract at residues asparagine 279–aspartate 282 is G4. The interval isoleucine 309–glycine 311 is G5. The KH type-2 domain maps to valine 361–lysine 437.

The protein belongs to the TRAFAC class TrmE-Era-EngA-EngB-Septin-like GTPase superfamily. Era GTPase family.

In terms of biological role, has a crucial role in plant growth and development, possibly by influencing mitochondrial division. The chain is GTP-binding protein ERG (ERG) from Arabidopsis thaliana (Mouse-ear cress).